Reading from the N-terminus, the 489-residue chain is Putative L,D-transpeptidase HI_1667 (489 aa).

A helical transmembrane segment spans residues 10-29 (LSLFALSLSMMMSGCVLVGL). Residues 254–433 (NGIFVNIPSY…ETRKNTVLAS (180 aa)) form the L,D-TPase catalytic domain. Residue His-384 is the Proton donor/acceptor of the active site. Catalysis depends on Cys-403, which acts as the Nucleophile.

It belongs to the YkuD family.

Its subcellular location is the membrane. It functions in the pathway cell wall biogenesis; peptidoglycan biosynthesis. The sequence is that of Putative L,D-transpeptidase HI_1667 from Haemophilus influenzae (strain ATCC 51907 / DSM 11121 / KW20 / Rd).